The chain runs to 76 residues: Large ribosomal subunit protein bL31 (76 aa).

Residues Cys16, Cys18, Cys36, and Cys39 each coordinate Zn(2+).

It belongs to the bacterial ribosomal protein bL31 family. Type A subfamily. As to quaternary structure, part of the 50S ribosomal subunit. Requires Zn(2+) as cofactor.

Its function is as follows. Binds the 23S rRNA. This Syntrophobacter fumaroxidans (strain DSM 10017 / MPOB) protein is Large ribosomal subunit protein bL31.